A 67-amino-acid polypeptide reads, in one-letter code: Photosystem II reaction center protein H (67 aa).

The helical transmembrane segment at 27-47 (GAVPVMAFIGVLLLVFLVILL) threads the bilayer.

It belongs to the PsbH family. In terms of assembly, PSII is composed of 1 copy each of membrane proteins PsbA, PsbB, PsbC, PsbD, PsbE, PsbF, PsbH, PsbI, PsbJ, PsbK, PsbL, PsbM, PsbT, PsbX, PsbY, Psb30/Ycf12, peripheral proteins PsbO, CyanoQ (PsbQ), PsbU, PsbV and a large number of cofactors. It forms dimeric complexes.

It is found in the cellular thylakoid membrane. In terms of biological role, one of the components of the core complex of photosystem II (PSII), required for its stability and/or assembly. PSII is a light-driven water:plastoquinone oxidoreductase that uses light energy to abstract electrons from H(2)O, generating O(2) and a proton gradient subsequently used for ATP formation. It consists of a core antenna complex that captures photons, and an electron transfer chain that converts photonic excitation into a charge separation. The polypeptide is Photosystem II reaction center protein H (Prochlorococcus marinus (strain MIT 9211)).